Reading from the N-terminus, the 494-residue chain is Ketol-acid reductoisomerase (NADP(+)) (494 aa).

Positions 14-208 constitute a KARI N-terminal Rossmann domain; that stretch reads LEQLGKCRFM…GGHRAGVLQS (195 aa). NADP(+) contacts are provided by residues 45–48, Arg-68, Arg-76, Ser-78, and 108–110; these read CGAQ and DKQ. His-132 is a catalytic residue. Gly-158 provides a ligand contact to NADP(+). KARI C-terminal knotted domains lie at 209 to 344 and 345 to 487; these read SFVA…NAPA and FDGA…MKDM. Mg(2+) contacts are provided by Asp-217, Glu-221, Glu-389, and Glu-393. Ser-414 contributes to the substrate binding site.

It belongs to the ketol-acid reductoisomerase family. Mg(2+) is required as a cofactor.

The enzyme catalyses (2R)-2,3-dihydroxy-3-methylbutanoate + NADP(+) = (2S)-2-acetolactate + NADPH + H(+). It catalyses the reaction (2R,3R)-2,3-dihydroxy-3-methylpentanoate + NADP(+) = (S)-2-ethyl-2-hydroxy-3-oxobutanoate + NADPH + H(+). Its pathway is amino-acid biosynthesis; L-isoleucine biosynthesis; L-isoleucine from 2-oxobutanoate: step 2/4. It participates in amino-acid biosynthesis; L-valine biosynthesis; L-valine from pyruvate: step 2/4. In terms of biological role, involved in the biosynthesis of branched-chain amino acids (BCAA). Catalyzes an alkyl-migration followed by a ketol-acid reduction of (S)-2-acetolactate (S2AL) to yield (R)-2,3-dihydroxy-isovalerate. In the isomerase reaction, S2AL is rearranged via a Mg-dependent methyl migration to produce 3-hydroxy-3-methyl-2-ketobutyrate (HMKB). In the reductase reaction, this 2-ketoacid undergoes a metal-dependent reduction by NADPH to yield (R)-2,3-dihydroxy-isovalerate. The protein is Ketol-acid reductoisomerase (NADP(+)) of Tolumonas auensis (strain DSM 9187 / NBRC 110442 / TA 4).